The sequence spans 132 residues: Cytochrome c-554 (132 aa).

The signal sequence occupies residues 1 to 24 (MKSISMLTLAASVAFAVTAGQAVA). Positions 26–126 (GDPAAGEKVF…NVWAYLSQFG (101 aa)) constitute a Cytochrome c domain. The heme c site is built by C38, C41, H42, and M104.

Binds 1 heme c group covalently per subunit.

Its subcellular location is the periplasm. This is Cytochrome c-554 from Methylosinus trichosporium.